The chain runs to 46 residues: Delta-actitoxin-Avd1d (46 aa).

3 cysteine pairs are disulfide-bonded: Cys4/Cys44, Cys6/Cys34, and Cys27/Cys45.

Belongs to the sea anemone sodium channel inhibitory toxin family. Type I subfamily.

The protein resides in the secreted. The protein localises to the nematocyst. Binds specifically to voltage-gated sodium channels (Nav), thereby delaying their inactivation during signal transduction. Thus it strongly stimulates mammalian cardiac muscle contraction. This chain is Delta-actitoxin-Avd1d, found in Anemonia sulcata (Mediterranean snakelocks sea anemone).